The chain runs to 140 residues: uncharacterized protein (140 aa).

2 consecutive transmembrane segments (helical) span residues 4–21 (ILKI…YLFG) and 26–48 (LVKV…SGYL).

Belongs to the bacteriophage holin family. Cp-1 holin subfamily.

The protein localises to the cell membrane. This is an uncharacterized protein from Listeria innocua serovar 6a (strain ATCC BAA-680 / CLIP 11262).